We begin with the raw amino-acid sequence, 251 residues long: uncharacterized protein (251 aa).

The N-terminal stretch at 1–18 (MRILIILSIILCSFFARA) is a signal peptide.

Belongs to the MlaA family.

This is an uncharacterized protein from Rickettsia typhi (strain ATCC VR-144 / Wilmington).